Here is a 547-residue protein sequence, read N- to C-terminus: Putative nitric oxide synthase (547 aa).

The segment covering 24–40 has biased composition (low complexity); that stretch reads QLAPNPSSFSPTRAAST. 2 disordered regions span residues 24 to 57 and 72 to 91; these read QLAPNPSSFSPTRAASTAPPPPEGAGPAAPSRGD and VLAPEDAERRRRRREKRKAL. Residues 81-91 are compositionally biased toward basic residues; the sequence is RRRRREKRKAL. The CP-type G domain occupies 167–343; sequence ADQLRDKLSY…LYDTPGVHLH (177 aa).

This sequence belongs to the TRAFAC class YlqF/YawG GTPase family. NOA1 subfamily.

The catalysed reaction is 2 L-arginine + 3 NADPH + 4 O2 + H(+) = 2 L-citrulline + 2 nitric oxide + 3 NADP(+) + 4 H2O. Produces nitric oxide (NO) which is a messenger molecule involved in hormonal signaling and defense responses in plant. The polypeptide is Putative nitric oxide synthase (Oryza sativa subsp. japonica (Rice)).